A 188-amino-acid chain; its full sequence is GTP cyclohydrolase 1 (188 aa).

C76, H79, and C148 together coordinate Zn(2+).

The protein belongs to the GTP cyclohydrolase I family. Homomer.

The catalysed reaction is GTP + H2O = 7,8-dihydroneopterin 3'-triphosphate + formate + H(+). Its pathway is cofactor biosynthesis; 7,8-dihydroneopterin triphosphate biosynthesis; 7,8-dihydroneopterin triphosphate from GTP: step 1/1. This Pelotomaculum thermopropionicum (strain DSM 13744 / JCM 10971 / SI) protein is GTP cyclohydrolase 1.